Here is a 183-residue protein sequence, read N- to C-terminus: MHLLPEFASHHAVSIPELLVSRDERQARQHAWLKRHPVPLVSFTVVAPGPIKDSEVTRRIFNHGVTALRALATKQGWQIQEQAALVSASGPEGMLSIAAPARDLKLATIELEHSHPLGRLWDIDVLTPEGDILSRRDYSLPPRRCLLCEQSAAVCARGKTHQLTDLLNRMEALLNDVDACNVN.

The protein belongs to the CitX family.

It catalyses the reaction apo-[citrate lyase ACP] + 2'-(5''-triphospho-alpha-D-ribosyl)-3'-dephospho-CoA = holo-[citrate lyase ACP] + diphosphate. In terms of biological role, transfers 2-(5''-triphosphoribosyl)-3'-dephosphocoenzyme-A on a serine residue to the apo-acyl carrier protein (gamma chain) of the citrate lyase to yield holo-acyl carrier protein. In Escherichia coli O45:K1 (strain S88 / ExPEC), this protein is Apo-citrate lyase phosphoribosyl-dephospho-CoA transferase.